Consider the following 284-residue polypeptide: D-tagatose-1,6-bisphosphate aldolase subunit GatY (284 aa).

The Proton donor role is filled by Asp82. Zn(2+) is bound by residues His83 and His180. Dihydroxyacetone phosphate is bound at residue Gly181. Zn(2+) is bound at residue His208. Dihydroxyacetone phosphate is bound by residues 209–211 (GAS) and 230–233 (NVAT).

This sequence belongs to the class II fructose-bisphosphate aldolase family. TagBP aldolase GatY subfamily. Forms a complex with GatZ. Zn(2+) is required as a cofactor.

The enzyme catalyses D-tagatofuranose 1,6-bisphosphate = D-glyceraldehyde 3-phosphate + dihydroxyacetone phosphate. Its pathway is carbohydrate metabolism; D-tagatose 6-phosphate degradation; D-glyceraldehyde 3-phosphate and glycerone phosphate from D-tagatose 6-phosphate: step 2/2. Functionally, catalytic subunit of the tagatose-1,6-bisphosphate aldolase GatYZ, which catalyzes the reversible aldol condensation of dihydroxyacetone phosphate (DHAP or glycerone-phosphate) with glyceraldehyde 3-phosphate (G3P) to produce tagatose 1,6-bisphosphate (TBP). Requires GatZ subunit for full activity and stability. Is involved in the catabolism of galactitol. This chain is D-tagatose-1,6-bisphosphate aldolase subunit GatY, found in Shigella dysenteriae serotype 1 (strain Sd197).